Here is an 82-residue protein sequence, read N- to C-terminus: Small ribosomal subunit protein bS18 (82 aa).

Residues 1–10 are compositionally biased toward polar residues; the sequence is MTDTNQNSSR. Residues 1 to 21 are disordered; sequence MTDTNQNSSRRPFHRRRKTCP.

This sequence belongs to the bacterial ribosomal protein bS18 family. As to quaternary structure, part of the 30S ribosomal subunit. Forms a tight heterodimer with protein bS6.

Its function is as follows. Binds as a heterodimer with protein bS6 to the central domain of the 16S rRNA, where it helps stabilize the platform of the 30S subunit. The protein is Small ribosomal subunit protein bS18 of Bartonella tribocorum (strain CIP 105476 / IBS 506).